The primary structure comprises 7214 residues: Nonribosomal peptide synthetase atnA (7214 aa).

Residues 257-651 (ERKALEQPHA…VGRKDTQVKI (395 aa)) form an adenylation 1 region. Residues 786–862 (EPVTETEKAV…AMSQIAVELS (77 aa)) form the Carrier 1 domain. An O-(pantetheine 4'-phosphoryl)serine modification is found at serine 823. Residues 899–1318 (EDAYPATALQ…LVSQKDYTQI (420 aa)) form a condensation 1 region. Residues 1340–1735 (QVLATPDAPA…ARKDTQAKVR (396 aa)) form an adenylation 2 region. One can recognise a Carrier 2 domain in the interval 1877–1953 (QPTSDIEKKV…ALAGRAQYIE (77 aa)). The residue at position 1914 (serine 1914) is an O-(pantetheine 4'-phosphoryl)serine. Positions 1962 to 2384 (PEAEVIDEWF…RQVLETGIDE (423 aa)) are epimerization. The segment at 2431-2845 (SPCSPMQLGL…MLSPLDRASL (415 aa)) is condensation 2. The tract at residues 2866 to 3262 (QNARKRPHAL…VGRKDTQVKV (397 aa)) is adenylation 3. Residues 3398 to 3472 (ALETPMEETI…DMARIVVAAY (75 aa)) enclose the Carrier 3 domain. At serine 3433 the chain carries O-(pantetheine 4'-phosphoryl)serine. The tract at residues 3510 to 3904 (VEDVYPSTSL…QLCENEDGRL (395 aa)) is condensation 3. Positions 3943-4339 (ERARLHPDLL…VGRKDSQVKL (397 aa)) are adenylation 4. The Carrier 4 domain occupies 4476-4552 (VPGSEAEKVI…ELAGRVTSIS (77 aa)). Serine 4513 carries the post-translational modification O-(pantetheine 4'-phosphoryl)serine. Residues 4601-5033 (VEDVYPCSPL…TSAAMRAQLL (433 aa)) are condensation 4. The segment at 5051–5446 (FHRTALRYPE…VGRKDTQIKF (396 aa)) is adenylation 5. The tract at residues 5489–5515 (FITTEGGSGHENKGSPSLKGSSGDPVS) is disordered. Positions 5591-5667 (APRTAMEKRL…QMANIVARNA (77 aa)) constitute a Carrier 5 domain. Serine 5628 carries the post-translational modification O-(pantetheine 4'-phosphoryl)serine. Residues 5707 to 6123 (QDVYPCTPLQ…HLLGDNEIKM (417 aa)) form a condensation 5 region. An adenylation 6 region spans residues 6145–6543 (ERAVLQPEAI…GRKDTQIKLR (399 aa)). The Carrier 6 domain occupies 6683 to 6766 (DPADKLALAL…DVARMIEHGN (84 aa)). Serine 6725 carries the O-(pantetheine 4'-phosphoryl)serine modification. Residues 6814-7194 (ILLTGATGFL…KSISYMRQIG (381 aa)) form a thioesterase (TE) domain region. The tract at residues 6895–6915 (STVEGRDHPGSESGSTAGPAE) is disordered.

Belongs to the NRP synthetase family.

The protein operates within secondary metabolite biosynthesis. Nonribosomal peptide synthetase; part of the gene cluster that mediates the biosynthesis of aspercryptins, linear lipopeptides built from six amino acids including 2 highly unusual and nonproteogenic amino acids, 2-amino-octanoic acid (2aoa) and 2-amino-dodecanol (2adol). The core structure of aspercryptins is as follows: Ser/Ala-Thr-Ile/Val-2aoa-Asn-2adol. The first step of aspercryptin biosynthesis is the generation of the fatty acid precursors, octanoic and dodecanoic acids, by the FAS subunits atnF and atnM. The fatty acid precursors are likely transformed into the corresponding alpha-amino fatty acids in three steps. First, they are hydroxylated by the cytochrome P450 monooxygenase atnE, then oxidized to the corresponding alpha-keto acids by the NAD(P)-dependent oxidoreductase atnD, and finally converted to the alpha-amino fatty acids by the PLP-dependent aminotransferases atnH or atnJ. the alpha-amino fatty acids, 2-amino-octanoic and 2-amino-dodecanoic acids, are recognized, activated, and covalently tethered to the NRPS atnA by its fourth and sixth adenylation domains. The second module of atnA is the Thr module and contains an epimerase (E) domain responsible for the epimerization of Thr to D-allo-Thr. Additionally, despite atnA having only one epimerase domain, the first amino acid of aspercryptin A1 is D-Ser, suggesting that serine is either loaded directly as D-Ser on the first module or that the epimerase domain in the threonine module epimerizes both L-Ser and L-Thr. After condensation of the hexapeptide of aspercryptin, the C-terminal reductase (TE) domain might be involved in the reductive release and production of the aldehyde hexapeptide. Further reduction would generate aspercryptins. The variety of aspercryptins produced reflects the flexibility of the atnA NRPS, allowing incorporation of alanine instead of serine, valine for isoleucine, and a C10 fatty amino alcohol instead of the C12 version. AtnB seems to be involved in the selectivity for Ile versus Val by the third module. Moreover, type B, C and D aspercryptins have an additional N-terminal cichorine, acetyl and propionyl group respectively. The chain is Nonribosomal peptide synthetase atnA from Emericella nidulans (strain FGSC A4 / ATCC 38163 / CBS 112.46 / NRRL 194 / M139) (Aspergillus nidulans).